Consider the following 531-residue polypeptide: Retinoid isomerohydrolase (531 aa).

Residue cysteine 112 is the site of S-palmitoyl cysteine; in membrane form attachment. The Fe cation site is built by histidine 180, histidine 241, and histidine 313. Cysteine 329 carries S-palmitoyl cysteine; in membrane form lipidation. Histidine 526 is a binding site for Fe cation.

The protein belongs to the carotenoid oxygenase family. It depends on Fe(2+) as a cofactor. In terms of processing, palmitoylated. As to expression, retinal pigment epithelium-specific.

It is found in the cytoplasm. The protein localises to the cell membrane. The enzyme catalyses an all-trans-retinyl ester + H2O = 11-cis-retinol + a fatty acid + H(+). It carries out the reaction lutein = (3R,3'S)-zeaxanthin. It catalyses the reaction all-trans-retinyl hexadecanoate + H2O = 11-cis-retinol + hexadecanoate + H(+). Functionally, plays important roles in the production of 11-cis retinal and in visual pigment regeneration. Capable of catalyzing the isomerization of lutein to meso-zeaxanthin an eye-specific carotenoid. This Danio rerio (Zebrafish) protein is Retinoid isomerohydrolase (rpe65a).